The primary structure comprises 191 residues: Small ribosomal subunit protein uS5 (191 aa).

Positions 21-84 (FADRLVAINR…EQAKRQMIRV (64 aa)) constitute an S5 DRBM domain. The interval 155 to 191 (LRKESSPRSVAQRRGKKVADILPKVDAAPAPAETAEA) is disordered. A compositionally biased stretch (low complexity) spans 181–191 (AAPAPAETAEA).

The protein belongs to the universal ribosomal protein uS5 family. In terms of assembly, part of the 30S ribosomal subunit. Contacts proteins S4 and S8.

In terms of biological role, with S4 and S12 plays an important role in translational accuracy. Its function is as follows. Located at the back of the 30S subunit body where it stabilizes the conformation of the head with respect to the body. The polypeptide is Small ribosomal subunit protein uS5 (Roseobacter denitrificans (strain ATCC 33942 / OCh 114) (Erythrobacter sp. (strain OCh 114))).